The primary structure comprises 215 residues: Cytochrome b6 (215 aa).

A helical membrane pass occupies residues 32-52 (IFYCLGGITLTCFLVQVATGF). C35 contacts heme c. Residues H86 and H100 each coordinate heme b. 3 consecutive transmembrane segments (helical) span residues 90–110 (ASMMVLMMILHVFRVYLTGGF), 116–136 (LTWVTGVILAVLTASFGVTGY), and 186–206 (LHTFVLPLLTAVFMLMHFPMI). H187 and H202 together coordinate heme b.

It belongs to the cytochrome b family. PetB subfamily. The 4 large subunits of the cytochrome b6-f complex are cytochrome b6, subunit IV (17 kDa polypeptide, PetD), cytochrome f and the Rieske protein, while the 4 small subunits are PetG, PetL, PetM and PetN. The complex functions as a dimer. Requires heme b as cofactor. The cofactor is heme c.

It localises to the plastid. Its subcellular location is the chloroplast thylakoid membrane. Its function is as follows. Component of the cytochrome b6-f complex, which mediates electron transfer between photosystem II (PSII) and photosystem I (PSI), cyclic electron flow around PSI, and state transitions. In Liriodendron tulipifera (Tuliptree), this protein is Cytochrome b6.